The following is a 160-amino-acid chain: Transcription elongation factor GreB (160 aa).

This sequence belongs to the GreA/GreB family. GreB subfamily.

Its function is as follows. Necessary for efficient RNA polymerase transcription elongation past template-encoded arresting sites. The arresting sites in DNA have the property of trapping a certain fraction of elongating RNA polymerases that pass through, resulting in locked ternary complexes. Cleavage of the nascent transcript by cleavage factors such as GreA or GreB allows the resumption of elongation from the new 3'terminus. GreB releases sequences of up to 9 nucleotides in length. This is Transcription elongation factor GreB from Vibrio vulnificus (strain YJ016).